The following is a 365-amino-acid chain: Class I histocompatibility antigen, Gogo-A*0501 alpha chain (365 aa).

The first 24 residues, 1–24, serve as a signal peptide directing secretion; the sequence is MAVVAPRTLLLLLSGALALTQTWA. The tract at residues 25–114 is alpha-1; sequence GSHSMRYFST…ALRYYNQSED (90 aa). The Extracellular portion of the chain corresponds to 25–308; it reads GSHSMRYFST…EPSSQPTIPI (284 aa). The N-linked (GlcNAc...) asparagine glycan is linked to Asn110. The alpha-2 stretch occupies residues 115–206; that stretch reads GSHTIQRMYG…ENGKETLQRT (92 aa). Cystine bridges form between Cys125/Cys188 and Cys227/Cys283. An alpha-3 region spans residues 207 to 298; sequence DAPKTHTTHQ…GLPKPLTLRW (92 aa). An Ig-like C1-type domain is found at 209-295; that stretch reads PKTHTTHQAV…QHEGLPKPLT (87 aa). The tract at residues 299–308 is connecting peptide; sequence EPSSQPTIPI. Residues 309-332 form a helical membrane-spanning segment; the sequence is VGIIAGLVLFGAVIAGAVVAAVRW. The Cytoplasmic portion of the chain corresponds to 333–365; that stretch reads RRKSSDRKGGSYSQAASSDSAQGSDVSLTACKV. Residues 338-365 are disordered; that stretch reads DRKGGSYSQAASSDSAQGSDVSLTACKV. Low complexity predominate over residues 342–359; it reads GSYSQAASSDSAQGSDVS. Ser343 is modified (phosphoserine). Residue Tyr344 is modified to Phosphotyrosine. 5 positions are modified to phosphoserine: Ser345, Ser349, Ser352, Ser356, and Ser359.

Belongs to the MHC class I family. In terms of assembly, heterodimer of an alpha chain and a beta chain (beta-2-microglobulin).

The protein resides in the membrane. Involved in the presentation of foreign antigens to the immune system. This Gorilla gorilla gorilla (Western lowland gorilla) protein is Class I histocompatibility antigen, Gogo-A*0501 alpha chain.